Reading from the N-terminus, the 486-residue chain is N-succinylglutamate 5-semialdehyde dehydrogenase (486 aa).

Position 221 to 226 (221 to 226 (GSSATG)) interacts with NAD(+). Catalysis depends on residues Glu-244 and Cys-278.

It belongs to the aldehyde dehydrogenase family. AstD subfamily.

The enzyme catalyses N-succinyl-L-glutamate 5-semialdehyde + NAD(+) + H2O = N-succinyl-L-glutamate + NADH + 2 H(+). It functions in the pathway amino-acid degradation; L-arginine degradation via AST pathway; L-glutamate and succinate from L-arginine: step 4/5. Its function is as follows. Catalyzes the NAD-dependent reduction of succinylglutamate semialdehyde into succinylglutamate. The polypeptide is N-succinylglutamate 5-semialdehyde dehydrogenase (Chromobacterium violaceum (strain ATCC 12472 / DSM 30191 / JCM 1249 / CCUG 213 / NBRC 12614 / NCIMB 9131 / NCTC 9757 / MK)).